A 119-amino-acid polypeptide reads, in one-letter code: Large ribosomal subunit protein bL20c (119 aa).

Belongs to the bacterial ribosomal protein bL20 family.

The protein resides in the plastid. It is found in the chloroplast. Binds directly to 23S ribosomal RNA and is necessary for the in vitro assembly process of the 50S ribosomal subunit. It is not involved in the protein synthesizing functions of that subunit. The protein is Large ribosomal subunit protein bL20c (rpl20) of Pinus thunbergii (Japanese black pine).